Consider the following 184-residue polypeptide: Glutathione-regulated potassium-efflux system ancillary protein KefG (184 aa).

This sequence belongs to the NAD(P)H dehydrogenase (quinone) family. KefG subfamily. In terms of assembly, interacts with KefB.

It is found in the cell inner membrane. It carries out the reaction a quinone + NADH + H(+) = a quinol + NAD(+). The catalysed reaction is a quinone + NADPH + H(+) = a quinol + NADP(+). Regulatory subunit of a potassium efflux system that confers protection against electrophiles. Required for full activity of KefB. In Erwinia tasmaniensis (strain DSM 17950 / CFBP 7177 / CIP 109463 / NCPPB 4357 / Et1/99), this protein is Glutathione-regulated potassium-efflux system ancillary protein KefG.